We begin with the raw amino-acid sequence, 275 residues long: DNA-directed RNA polymerase subunit Rpo3 (275 aa).

This sequence belongs to the archaeal Rpo3/eukaryotic RPB3 RNA polymerase subunit family. Part of the RNA polymerase complex.

It localises to the cytoplasm. The catalysed reaction is RNA(n) + a ribonucleoside 5'-triphosphate = RNA(n+1) + diphosphate. Functionally, DNA-dependent RNA polymerase (RNAP) catalyzes the transcription of DNA into RNA using the four ribonucleoside triphosphates as substrates. This chain is DNA-directed RNA polymerase subunit Rpo3, found in Methanopyrus kandleri (strain AV19 / DSM 6324 / JCM 9639 / NBRC 100938).